The chain runs to 284 residues: Tropomyosin beta chain (284 aa).

N-acetylmethionine is present on methionine 1. Residues 1–78 (MDAIKKKMQM…EKLEQAEKKA (78 aa)) form a disordered region. Residues 1–284 (MDAIKKKMQM…DNALNDITSL (284 aa)) adopt a coiled-coil conformation. Composition is skewed to basic and acidic residues over residues 12–40 (KLDK…KQLE) and 51–78 (KGTE…EKKA). Threonine 53 carries the post-translational modification Phosphothreonine. Serine 61 carries the post-translational modification Phosphoserine; by PIK3CG. Threonine 79 carries the phosphothreonine modification. Position 87 is a phosphoserine (serine 87). Residue threonine 108 is modified to Phosphothreonine. The segment at 117-136 (EKAADESERGMKVIENRAMK) is disordered. Serine 158, serine 206, and serine 215 each carry phosphoserine. Position 252 is a phosphothreonine (threonine 252). Tyrosine 261 carries the phosphotyrosine modification. Serine 271 is subject to Phosphoserine. Threonine 282 carries the phosphothreonine modification. Serine 283 is subject to Phosphoserine.

The protein belongs to the tropomyosin family. Homodimer. Heterodimer of an alpha (TPM1, TPM3 or TPM4) and a beta (TPM2) chain. Phosphorylated on Ser-61 by PIK3CG. Phosphorylation on Ser-61 is required for ADRB2 internalization.

The protein resides in the cytoplasm. The protein localises to the cytoskeleton. In terms of biological role, binds to actin filaments in muscle and non-muscle cells. Plays a central role, in association with the troponin complex, in the calcium dependent regulation of vertebrate striated muscle contraction. Smooth muscle contraction is regulated by interaction with caldesmon. In non-muscle cells is implicated in stabilizing cytoskeleton actin filaments. The non-muscle isoform may have a role in agonist-mediated receptor internalization. This chain is Tropomyosin beta chain (Tpm2), found in Mus musculus (Mouse).